We begin with the raw amino-acid sequence, 383 residues long: Histidine decarboxylase (383 aa).

Histidine 120 contacts substrate. Position 233 is an N6-(pyridoxal phosphate)lysine (lysine 233).

This sequence belongs to the group II decarboxylase family. As to quaternary structure, homotetramer. Pyridoxal 5'-phosphate serves as cofactor.

The catalysed reaction is L-histidine + H(+) = histamine + CO2. This is Histidine decarboxylase from Acinetobacter baumannii (strain ATCC 17978 / DSM 105126 / CIP 53.77 / LMG 1025 / NCDC KC755 / 5377).